Reading from the N-terminus, the 443-residue chain is FLYWCH-type zinc finger-containing protein peb-1 (443 aa).

The disordered stretch occupies residues 22–49 (KPGSSDISSSSTDTSAISPISVSSMPLS). A compositionally biased stretch (low complexity) spans 25–42 (SSDISSSSTDTSAISPIS). Residues 46-203 (MPLSPDKEKK…RNKDGKPKKP (158 aa)) constitute a DNA-binding region (required for DNA-binding). An FLYWCH-type zinc finger spans residues 69-135 (IVTSFKGYQK…NACTKGSHNH (67 aa)). The tract at residues 251 to 271 (PTIQIPQPIPTPIQHQQQEQS) is disordered.

It is found in the nucleus. Its function is as follows. Putative transcription factor. Binds to specific sequence motif 5'-[TC][AGT]TGCC[GA][AT]-3' in regulatory elements of target genes such as myosin myo-2. May modulate gene expression, perhaps acting in opposition to transcription factor pha-4. Involved in morphogenesis, perhaps especially in formation of the pharynx. Plays roles in molting, feeding and morphology. The sequence is that of FLYWCH-type zinc finger-containing protein peb-1 from Caenorhabditis elegans.